The chain runs to 253 residues: Adenosylcobinamide-GDP ribazoletransferase (253 aa).

7 consecutive transmembrane segments (helical) span residues 33–53 (ISPLIIGISLALIESAVYVLL), 56–76 (ILEALAGIVLLGVVELLRGFN), 106–126 (IGSGGIGLLLVYLSIQIVALL), 132–152 (FYTIFYLISSNVLSMTIGLYI), 178–198 (VLLFELIPFISLYNIIVFLVF), 209–229 (LGGSSGDIAGASITLSFPLFL), and 233–253 (EITNLNYSLLSILCYLFLYLH).

This sequence belongs to the CobS family. Mg(2+) is required as a cofactor.

Its subcellular location is the cell membrane. It catalyses the reaction alpha-ribazole + adenosylcob(III)inamide-GDP = adenosylcob(III)alamin + GMP + H(+). It carries out the reaction alpha-ribazole 5'-phosphate + adenosylcob(III)inamide-GDP = adenosylcob(III)alamin 5'-phosphate + GMP + H(+). It participates in cofactor biosynthesis; adenosylcobalamin biosynthesis; adenosylcobalamin from cob(II)yrinate a,c-diamide: step 7/7. Joins adenosylcobinamide-GDP and alpha-ribazole to generate adenosylcobalamin (Ado-cobalamin). Also synthesizes adenosylcobalamin 5'-phosphate from adenosylcobinamide-GDP and alpha-ribazole 5'-phosphate. The chain is Adenosylcobinamide-GDP ribazoletransferase from Saccharolobus islandicus (strain M.16.27) (Sulfolobus islandicus).